The primary structure comprises 371 residues: Methylthioribose-1-phosphate isomerase (371 aa).

Substrate-binding positions include 53–55, R90, and Q203; that span reads RGA. D243 serves as the catalytic Proton donor. 253 to 254 is a binding site for substrate; it reads NK.

The protein belongs to the eIF-2B alpha/beta/delta subunits family. MtnA subfamily.

The catalysed reaction is 5-(methylsulfanyl)-alpha-D-ribose 1-phosphate = 5-(methylsulfanyl)-D-ribulose 1-phosphate. It catalyses the reaction 5-deoxy-alpha-D-ribose 1-phosphate = 5-deoxy-D-ribulose 1-phosphate. Its pathway is amino-acid biosynthesis; L-methionine biosynthesis via salvage pathway; L-methionine from S-methyl-5-thio-alpha-D-ribose 1-phosphate: step 1/6. Catalyzes the interconversion of methylthioribose-1-phosphate (MTR-1-P) into methylthioribulose-1-phosphate (MTRu-1-P). Also catalyzes the interconversion of 5-deoxyribose 1-phosphate and 5-deoxyribulose 1-phosphate. Part of a bifunctional DHAP-shunt salvage pathway for SAM by-products. The polypeptide is Methylthioribose-1-phosphate isomerase (Escherichia coli O45:K1 (strain S88 / ExPEC)).